The sequence spans 581 residues: Proline--tRNA ligase (581 aa).

It belongs to the class-II aminoacyl-tRNA synthetase family. ProS type 1 subfamily. Homodimer.

The protein localises to the cytoplasm. The enzyme catalyses tRNA(Pro) + L-proline + ATP = L-prolyl-tRNA(Pro) + AMP + diphosphate. Its function is as follows. Catalyzes the attachment of proline to tRNA(Pro) in a two-step reaction: proline is first activated by ATP to form Pro-AMP and then transferred to the acceptor end of tRNA(Pro). As ProRS can inadvertently accommodate and process non-cognate amino acids such as alanine and cysteine, to avoid such errors it has two additional distinct editing activities against alanine. One activity is designated as 'pretransfer' editing and involves the tRNA(Pro)-independent hydrolysis of activated Ala-AMP. The other activity is designated 'posttransfer' editing and involves deacylation of mischarged Ala-tRNA(Pro). The misacylated Cys-tRNA(Pro) is not edited by ProRS. The protein is Proline--tRNA ligase of Verminephrobacter eiseniae (strain EF01-2).